We begin with the raw amino-acid sequence, 502 residues long: Beta-glucosidase 7 (502 aa).

The N-terminal stretch at 1 to 22 is a signal peptide; the sequence is MKPFSQFFVFVVTVSATSYIDA. A beta-D-glucoside-binding positions include Gln-42, His-140, and 185–186; that span reads NE. Residue Glu-186 is the Proton donor of the active site. An N-linked (GlcNAc...) asparagine glycan is attached at Asn-208. A beta-D-glucoside is bound at residue Tyr-325. Asn-359 is a glycosylation site (N-linked (GlcNAc...) asparagine). Glu-392 contacts a beta-D-glucoside. Glu-392 (nucleophile) is an active-site residue. The N-linked (GlcNAc...) asparagine glycan is linked to Asn-425. The a beta-D-glucoside site is built by Trp-435 and Tyr-451. N-linked (GlcNAc...) asparagine glycans are attached at residues Asn-457 and Asn-479.

This sequence belongs to the glycosyl hydrolase 1 family.

It carries out the reaction Hydrolysis of terminal, non-reducing beta-D-glucosyl residues with release of beta-D-glucose.. In Arabidopsis thaliana (Mouse-ear cress), this protein is Beta-glucosidase 7.